A 73-amino-acid chain; its full sequence is DNA gyrase inhibitor YacG (73 aa).

Positions 12, 15, 31, and 35 each coordinate Zn(2+). The tract at residues 47–73 (DYAIPGEPIDPAEPSEDRNGAEGPPTD) is disordered.

This sequence belongs to the DNA gyrase inhibitor YacG family. In terms of assembly, interacts with GyrB. Zn(2+) is required as a cofactor.

In terms of biological role, inhibits all the catalytic activities of DNA gyrase by preventing its interaction with DNA. Acts by binding directly to the C-terminal domain of GyrB, which probably disrupts DNA binding by the gyrase. The protein is DNA gyrase inhibitor YacG of Methylococcus capsulatus (strain ATCC 33009 / NCIMB 11132 / Bath).